We begin with the raw amino-acid sequence, 187 residues long: Elongation factor P (187 aa).

The protein belongs to the elongation factor P family.

It localises to the cytoplasm. The protein operates within protein biosynthesis; polypeptide chain elongation. Functionally, involved in peptide bond synthesis. Stimulates efficient translation and peptide-bond synthesis on native or reconstituted 70S ribosomes in vitro. Probably functions indirectly by altering the affinity of the ribosome for aminoacyl-tRNA, thus increasing their reactivity as acceptors for peptidyl transferase. This chain is Elongation factor P, found in Corynebacterium jeikeium (strain K411).